The chain runs to 244 residues: Putative nucleosome assembly protein C36B7.08c (244 aa).

The tract at residues 199 to 244 (EAMTEEASDEDESVDLEEDEEEEDEEDEEGDEEKQEPPSKKSKKSN) is disordered. Acidic residues predominate over residues 201–232 (MTEEASDEDESVDLEEDEEEEDEEDEEGDEEK). At Ser211 the chain carries Phosphoserine.

This sequence belongs to the nucleosome assembly protein (NAP) family.

It is found in the nucleus. This chain is Putative nucleosome assembly protein C36B7.08c, found in Schizosaccharomyces pombe (strain 972 / ATCC 24843) (Fission yeast).